Consider the following 423-residue polypeptide: Putative gustatory receptor 97a (423 aa).

Topologically, residues 1-31 (MRFLRRQTRRLRSIWQRSLPVRFRRGKLHTQ) are cytoplasmic. A helical transmembrane segment spans residues 32–52 (LVTICLYATVFLNILYGVYLG). Topologically, residues 53-65 (RFSFRRKKFVFSK) are extracellular. Residues 66-86 (GLTIYSLFVATFFALFYIWNI) traverse the membrane as a helical segment. The Cytoplasmic portion of the chain corresponds to 87 to 99 (YNEISTGQINLRD). Residues 100–120 (TIGIYCYMNVCVCLFNYVTQW) traverse the membrane as a helical segment. Topologically, residues 121-152 (EKTLQIIRFQNSVPLFKVLDSLDISAMIVWRA) are extracellular. A helical membrane pass occupies residues 153-173 (FIYGLLKIVFCPLITYITLIL). Residues 174–200 (YHRRSISESQWTSVTTTKTMLPLIVSN) lie on the Cytoplasmic side of the membrane. A helical transmembrane segment spans residues 201 to 221 (QINNCFFGGLVLANLIFAAVN). The Extracellular portion of the chain corresponds to 222–278 (RKLHGIVKEANMLQSPVQMNLHKPYYRMRRFCELADLLDELARKYGFTASRSKNYLR). A helical membrane pass occupies residues 279–299 (FTDWSMVLSMLMNLLGITMGC). Topologically, residues 300–317 (YNQYLAIADHYINEEPFD) are cytoplasmic. The helical transmembrane segment at 318–338 (LFLAIVLVVFLAVPFLELVMV) threads the bilayer. Residues 339–423 (ARISNQTLTR…SDLTLRFSLK (85 aa)) are Extracellular-facing. 2 N-linked (GlcNAc...) asparagine glycosylation sites follow: Asn-343 and Asn-393.

The protein belongs to the insect chemoreceptor superfamily. Gustatory receptor (GR) family. Gr22e subfamily. As to expression, in larvae, is expressed in neurons of the terminal external chemosensory organ.

It localises to the cell membrane. Probable gustatory receptor which mediates acceptance or avoidance behavior, depending on its substrates. In Drosophila melanogaster (Fruit fly), this protein is Putative gustatory receptor 97a (Gr97a).